A 120-amino-acid polypeptide reads, in one-letter code: C-C motif chemokine 2 (120 aa).

The N-terminal stretch at 1–23 (MQRSSVLLCLLVIEATFCSLLMA) is a signal peptide. A Pyrrolidone carboxylic acid modification is found at Gln-24. 2 cysteine pairs are disulfide-bonded: Cys-33–Cys-57 and Cys-34–Cys-73. The disordered stretch occupies residues 91 to 120 (RTQQKQNSTAPQTSKPLNIRFTTQDPKNRS). The segment covering 93-120 (QQKQNSTAPQTSKPLNIRFTTQDPKNRS) has biased composition (polar residues). A glycan (N-linked (GlcNAc...) asparagine) is linked at Asn-97.

Belongs to the intercrine beta (chemokine CC) family. Monomer or homodimer; in equilibrium. Is tethered on endothelial cells by glycosaminoglycan (GAG) side chains of proteoglycans. Interacts with TNFAIP6 (via Link domain). Post-translationally, processing at the N-terminus can regulate receptor and target cell selectivity. Deletion of the N-terminal residue converts it from an activator of basophil to an eosinophil chemoattractant. In terms of processing, N-Glycosylated.

It localises to the secreted. In terms of biological role, acts as a ligand for C-C chemokine receptor CCR2. Signals through binding and activation of CCR2 and induces a strong chemotactic response and mobilization of intracellular calcium ions. Exhibits a chemotactic activity for monocytes and basophils but not neutrophils or eosinophils. Plays an important role in mediating peripheral nerve injury-induced neuropathic pain. Increases NMDA-mediated synaptic transmission in both dopamine D1 and D2 receptor-containing neurons, which may be caused by MAPK/ERK-dependent phosphorylation of GRIN2B/NMDAR2B. This is C-C motif chemokine 2 (CCL2) from Cavia porcellus (Guinea pig).